We begin with the raw amino-acid sequence, 332 residues long: NADH-quinone oxidoreductase subunit H (332 aa).

The next 9 helical transmembrane spans lie at 4 to 24 (FAFF…IFAS), 44 to 64 (IGPD…MIKL), 78 to 98 (FIFA…LAAI), 120 to 140 (VALL…FLGG), 165 to 185 (VGAL…LVDI), 194 to 214 (FSWL…ALFI), 255 to 275 (IAGA…FWII), 279 to 299 (IMMI…RAAF), and 312 to 332 (YLIL…AVLL).

This sequence belongs to the complex I subunit 1 family. NDH-1 is composed of 14 different subunits. Subunits NuoA, H, J, K, L, M, N constitute the membrane sector of the complex.

It localises to the cell inner membrane. The enzyme catalyses a quinone + NADH + 5 H(+)(in) = a quinol + NAD(+) + 4 H(+)(out). Its function is as follows. NDH-1 shuttles electrons from NADH, via FMN and iron-sulfur (Fe-S) centers, to quinones in the respiratory chain. The immediate electron acceptor for the enzyme in this species is believed to be ubiquinone. Couples the redox reaction to proton translocation (for every two electrons transferred, four hydrogen ions are translocated across the cytoplasmic membrane), and thus conserves the redox energy in a proton gradient. This subunit may bind ubiquinone. The sequence is that of NADH-quinone oxidoreductase subunit H from Campylobacter jejuni subsp. doylei (strain ATCC BAA-1458 / RM4099 / 269.97).